A 293-amino-acid chain; its full sequence is Homoserine kinase (293 aa).

83–93 (PITRGMGSSSA) is an ATP binding site.

The protein belongs to the GHMP kinase family. Homoserine kinase subfamily.

It is found in the cytoplasm. The catalysed reaction is L-homoserine + ATP = O-phospho-L-homoserine + ADP + H(+). It functions in the pathway amino-acid biosynthesis; L-threonine biosynthesis; L-threonine from L-aspartate: step 4/5. Catalyzes the ATP-dependent phosphorylation of L-homoserine to L-homoserine phosphate. This chain is Homoserine kinase, found in Helicobacter pylori (strain ATCC 700392 / 26695) (Campylobacter pylori).